The sequence spans 303 residues: MTQQRTLKNTIRATGVGLHSGDKVYMTLRPAPVDHGVVFRRVDLEPVVEVPADAELVTETTLCTGLTCNGAKIQTVEHLMSALAGLGVDNVIVELSSAELPIMDGSSGPFVFLLQSAGIVEQSKPKRFIRITQTVEVRDGDKVARFEPYEGYKLGFTIEFNHPMIPAKQSRQEIEFSTSAYVKEISRARTFGFMRDLEYMRERNLGLGGSMDNAIVLDEFRVLNEDGLRYTNEFVRHKILDAIGDLYLAGGAILGAYEGFKSGHALNNKLVRALLADQAAWEWVSFPEGTEQPPVTYASPVYA.

Residues H78, H237, and D241 each contribute to the Zn(2+) site. Residue H264 is the Proton donor of the active site.

Belongs to the LpxC family. The cofactor is Zn(2+).

The enzyme catalyses a UDP-3-O-[(3R)-3-hydroxyacyl]-N-acetyl-alpha-D-glucosamine + H2O = a UDP-3-O-[(3R)-3-hydroxyacyl]-alpha-D-glucosamine + acetate. It participates in glycolipid biosynthesis; lipid IV(A) biosynthesis; lipid IV(A) from (3R)-3-hydroxytetradecanoyl-[acyl-carrier-protein] and UDP-N-acetyl-alpha-D-glucosamine: step 2/6. Functionally, catalyzes the hydrolysis of UDP-3-O-myristoyl-N-acetylglucosamine to form UDP-3-O-myristoylglucosamine and acetate, the committed step in lipid A biosynthesis. This Xanthomonas axonopodis pv. citri (strain 306) protein is UDP-3-O-acyl-N-acetylglucosamine deacetylase.